The primary structure comprises 130 residues: Small ribosomal subunit protein eS8 (130 aa).

This sequence belongs to the eukaryotic ribosomal protein eS8 family. In terms of assembly, part of the 30S ribosomal subunit.

The polypeptide is Small ribosomal subunit protein eS8 (Thermococcus onnurineus (strain NA1)).